A 58-amino-acid chain; its full sequence is Small ribosomal subunit protein bS21 (58 aa).

A disordered region spans residues 25–58; it reads KAGTLQEARKREHYEKPSVKRKRKSEAARKRKKI. Residues 31–42 show a composition bias toward basic and acidic residues; that stretch reads EARKREHYEKPS. Over residues 43–58 the composition is skewed to basic residues; it reads VKRKRKSEAARKRKKI.

Belongs to the bacterial ribosomal protein bS21 family.

The sequence is that of Small ribosomal subunit protein bS21 from Streptococcus thermophilus (strain ATCC BAA-491 / LMD-9).